The primary structure comprises 216 residues: Large ribosomal subunit protein uL3 (216 aa).

Q157 carries the N5-methylglutamine modification.

The protein belongs to the universal ribosomal protein uL3 family. Part of the 50S ribosomal subunit. Forms a cluster with proteins L14 and L19. Methylated by PrmB.

Its function is as follows. One of the primary rRNA binding proteins, it binds directly near the 3'-end of the 23S rRNA, where it nucleates assembly of the 50S subunit. The sequence is that of Large ribosomal subunit protein uL3 from Xanthomonas axonopodis pv. citri (strain 306).